Consider the following 328-residue polypeptide: Ribosomal RNA small subunit methyltransferase H (328 aa).

Residues 64–66 (GGH), D83, F112, D129, and Q136 each bind S-adenosyl-L-methionine.

Belongs to the methyltransferase superfamily. RsmH family.

It is found in the cytoplasm. It catalyses the reaction cytidine(1402) in 16S rRNA + S-adenosyl-L-methionine = N(4)-methylcytidine(1402) in 16S rRNA + S-adenosyl-L-homocysteine + H(+). Specifically methylates the N4 position of cytidine in position 1402 (C1402) of 16S rRNA. This Bdellovibrio bacteriovorus (strain ATCC 15356 / DSM 50701 / NCIMB 9529 / HD100) protein is Ribosomal RNA small subunit methyltransferase H.